Consider the following 557-residue polypeptide: Probable WRKY transcription factor 20 (557 aa).

Over residues 1–12 the composition is skewed to basic and acidic residues; that stretch reads MNPQANDRKEFQ. Disordered stretches follow at residues 1 to 36 and 76 to 215; these read MNPQ…GGGA and KPEP…DGYN. Residues 95–114 are compositionally biased toward polar residues; the sequence is SASSSSYTGRGFHQNTFTEQ. A compositionally biased stretch (low complexity) spans 151–169; the sequence is SSHSPSSISDAAGSSSELS. Residues 193–207 show a composition bias toward polar residues; it reads SIQTSQNDSRGSTPS. Residues 205 to 269 constitute a DNA-binding region (WRKY 1); the sequence is TPSILADDGY…YKGTHDHPKP (65 aa). Positions 236, 241, 264, and 266 each coordinate Zn(2+). A disordered region spans residues 257 to 348; the sequence is DIIYKGTHDH…PDDDDPFSKR (92 aa). The span at 282-299 shows a compositional bias: basic and acidic residues; that stretch reads QEERLDKYPSSTGRDEKG. Residues 303–314 are compositionally biased toward polar residues; it reads YNLSNPNEQTGN. Positions 321–332 are enriched in low complexity; it reads SASDDGGEAAAS. The segment at residues 375-440 is a DNA-binding region (WRKY 2); the sequence is SEVDILDDGY…YEGKHDHDVP (66 aa). Zn(2+) is bound by residues cysteine 406, cysteine 411, histidine 435, and histidine 437. Disordered stretches follow at residues 433 to 486 and 520 to 557; these read GKHD…QHQN and NQYG…QSGP. The span at 520-536 shows a compositional bias: polar residues; that stretch reads NQYGQRETKNETQNGDI.

Belongs to the WRKY group I family.

It localises to the nucleus. Transcription factor. Interacts specifically with the W box (5'-(T)TGAC[CT]-3'), a frequently occurring elicitor-responsive cis-acting element. The sequence is that of Probable WRKY transcription factor 20 (WRKY20) from Arabidopsis thaliana (Mouse-ear cress).